The sequence spans 254 residues: MAAYKLVLIRHGESAWNLENRFSGWYDADLSPAGHEEAKRGGQALRDAGYEFDICFTSVQKRAIRTLWTVLDAIDQMWLPVVRTWRLNERHYGGLTGLNKAETAAKHGEAQVKIWRRSYDVPPPPMEPDHPFYSNISKDRRYADLTEDQLPSCESLKDTIARALPFWNEEIVPQIKEGKRVLIAAHGNSLRGIVKHLEGLSEEAIMELNLPTGIPIVYELDKNLKPIKPMQFLGDEETVRKAMEAVAAQGKAKK.

Substrate contacts are provided by residues 10-17 (RHGESAWN) and 23-24 (SG). His-11 (tele-phosphohistidine intermediate) is an active-site residue. A phosphoserine mark is found at Ser-14 and Ser-23. Position 26 is a phosphotyrosine (Tyr-26). Position 31 is a phosphoserine (Ser-31). Residues Arg-62, 89–92 (ERHY), and Lys-100 each bind substrate. The Proton donor/acceptor role is filled by Glu-89. Lys-106 carries the post-translational modification N6-acetyllysine. Substrate is bound at residue 116-117 (RR). Residue Ser-118 is modified to Phosphoserine. Substrate is bound at residue 187–188 (GN). N6-acetyllysine; alternate is present on Lys-251. Lys-251 carries the post-translational modification N6-succinyllysine; alternate. An N6-acetyllysine mark is found at Lys-253 and Lys-254.

The protein belongs to the phosphoglycerate mutase family. BPG-dependent PGAM subfamily. In terms of assembly, homodimer. Acetylated at Lys-253, Lys-253 and Lys-254 under high glucose condition. Acetylation increases catalytic activity. Under glucose restriction SIRT1 levels dramatically increase and it deacetylates the enzyme. In terms of tissue distribution, expressed in the liver and brain. Not found in the muscle.

It carries out the reaction (2R)-2-phosphoglycerate = (2R)-3-phosphoglycerate. The catalysed reaction is (2R)-3-phospho-glyceroyl phosphate = (2R)-2,3-bisphosphoglycerate + H(+). Functionally, catalyzes the interconversion of 2-phosphoglycerate and 3-phosphoglyceratea crucial step in glycolysis, by using 2,3-bisphosphoglycerate. Also catalyzes the interconversion of (2R)-2,3-bisphosphoglycerate and (2R)-3-phospho-glyceroyl phosphate. The polypeptide is Phosphoglycerate mutase 1 (Homo sapiens (Human)).